Reading from the N-terminus, the 122-residue chain is Holo-[acyl-carrier-protein] synthase (122 aa).

Mg(2+) contacts are provided by aspartate 8 and glutamate 60.

Belongs to the P-Pant transferase superfamily. AcpS family. It depends on Mg(2+) as a cofactor.

It is found in the cytoplasm. The catalysed reaction is apo-[ACP] + CoA = holo-[ACP] + adenosine 3',5'-bisphosphate + H(+). Transfers the 4'-phosphopantetheine moiety from coenzyme A to a Ser of acyl-carrier-protein. The polypeptide is Holo-[acyl-carrier-protein] synthase (Anaplasma phagocytophilum (strain HZ)).